The chain runs to 1375 residues: uncharacterized protein (1375 aa).

In terms of domain architecture, Helicase ATP-binding spans 277-476 (LLASGDIRGG…FGLLFLLRYS (200 aa)). 290–297 (DEMGMGKT) is an ATP binding site. An RING-type zinc finger spans residues 1092-1130 (CIICRDIIKQGFITTCGHLYCSFCLEAWLKHSSSCPMCK). The 147-residue stretch at 1190-1336 (TISKHLLYLK…QLDKLGLDVP (147 aa)) folds into the Helicase C-terminal domain.

Belongs to the SNF2/RAD54 helicase family.

Its subcellular location is the nucleus. This is an uncharacterized protein from Schizosaccharomyces pombe (strain 972 / ATCC 24843) (Fission yeast).